Here is a 64-residue protein sequence, read N- to C-terminus: MGIKPSYIKSMGIALLEQHGKSFNGNFDDNKKVVAEITTIESKMIRNRVAGYVTRKVNTTPARR.

It belongs to the eukaryotic ribosomal protein eS17 family.

This chain is Small ribosomal subunit protein eS17, found in Methanocorpusculum labreanum (strain ATCC 43576 / DSM 4855 / Z).